Reading from the N-terminus, the 235-residue chain is 1-(5-phosphoribosyl)-5-[(5-phosphoribosylamino)methylideneamino] imidazole-4-carboxamide isomerase (235 aa).

Asp8 serves as the catalytic Proton acceptor. Residue Asp128 is the Proton donor of the active site.

The protein belongs to the HisA/HisF family.

It is found in the cytoplasm. The catalysed reaction is 1-(5-phospho-beta-D-ribosyl)-5-[(5-phospho-beta-D-ribosylamino)methylideneamino]imidazole-4-carboxamide = 5-[(5-phospho-1-deoxy-D-ribulos-1-ylimino)methylamino]-1-(5-phospho-beta-D-ribosyl)imidazole-4-carboxamide. It participates in amino-acid biosynthesis; L-histidine biosynthesis; L-histidine from 5-phospho-alpha-D-ribose 1-diphosphate: step 4/9. The chain is 1-(5-phosphoribosyl)-5-[(5-phosphoribosylamino)methylideneamino] imidazole-4-carboxamide isomerase from Thermus thermophilus (strain ATCC BAA-163 / DSM 7039 / HB27).